The chain runs to 86 residues: Exodeoxyribonuclease 7 small subunit (86 aa).

Residues 67-86 (LSDPAQPEASEPFDPPSHDG) form a disordered region.

Belongs to the XseB family. As to quaternary structure, heterooligomer composed of large and small subunits.

It localises to the cytoplasm. The enzyme catalyses Exonucleolytic cleavage in either 5'- to 3'- or 3'- to 5'-direction to yield nucleoside 5'-phosphates.. Its function is as follows. Bidirectionally degrades single-stranded DNA into large acid-insoluble oligonucleotides, which are then degraded further into small acid-soluble oligonucleotides. The chain is Exodeoxyribonuclease 7 small subunit from Stenotrophomonas maltophilia (strain K279a).